The chain runs to 185 residues: MLNEIFNKQKTQSEKSLEALKKDFTTLRTGKVNIHILDHITVDYYGTQTPLNQVATVLASDASTISITPWEKPLLKTIESAIAAANIGVNPNNDGESVKLFFPPMTREQREENVKQAKAMGEKAKVSIRNIRKDANDAVKKLEKDKAISEDEAKKAYDEVQKLTDTYTTKIDESVKSKESELLKV.

The protein belongs to the RRF family.

The protein resides in the cytoplasm. Its function is as follows. Responsible for the release of ribosomes from messenger RNA at the termination of protein biosynthesis. May increase the efficiency of translation by recycling ribosomes from one round of translation to another. The chain is Ribosome-recycling factor from Campylobacter jejuni subsp. jejuni serotype O:23/36 (strain 81-176).